A 25-amino-acid polypeptide reads, in one-letter code: Chitinolytic alpha-amylase inhibitor PvCAI (25 aa).

In terms of assembly, homodimer.

The catalysed reaction is Random endo-hydrolysis of N-acetyl-beta-D-glucosaminide (1-&gt;4)-beta-linkages in chitin and chitodextrins.. Functionally, alpha-amylase inhibitor, active against Z.subfasciatus alpha-amylase (ZSA) but not porcine pancreatic alpha-amylase (PPA). Has chitinase activity. The sequence is that of Chitinolytic alpha-amylase inhibitor PvCAI from Phaseolus vulgaris (Kidney bean).